The chain runs to 450 residues: Probable ECA polymerase (450 aa).

Transmembrane regions (helical) follow at residues 6–26 (FSGL…LTWF), 37–57 (VFFS…TSVL), 63–83 (VGVA…CFYA), 118–138 (VILM…NGFL), 155–175 (GVAL…VYFL), 181–201 (AWLF…MIVG), 207–227 (IIIA…ISLW), 228–248 (MLAA…LKRY), 341–361 (LVVM…GLII), 378–398 (YKAA…IVLA), and 410–430 (VFFI…YWLF).

Belongs to the WzyE family. Probably part of a complex composed of WzxE, WzyE and WzzE.

The protein localises to the cell inner membrane. The protein operates within bacterial outer membrane biogenesis; enterobacterial common antigen biosynthesis. Functionally, probably involved in the polymerization of enterobacterial common antigen (ECA) trisaccharide repeat units. The polypeptide is Probable ECA polymerase (Escherichia fergusonii (strain ATCC 35469 / DSM 13698 / CCUG 18766 / IAM 14443 / JCM 21226 / LMG 7866 / NBRC 102419 / NCTC 12128 / CDC 0568-73)).